A 116-amino-acid chain; its full sequence is Large-conductance mechanosensitive channel (116 aa).

2 consecutive transmembrane segments (helical) span residues 7–27 (EFAL…GAAF) and 64–84 (GLFI…FIFV).

This sequence belongs to the MscL family. In terms of assembly, homopentamer.

Its subcellular location is the cell membrane. Functionally, channel that opens in response to stretch forces in the membrane lipid bilayer. May participate in the regulation of osmotic pressure changes within the cell. In Staphylococcus epidermidis (strain ATCC 35984 / DSM 28319 / BCRC 17069 / CCUG 31568 / BM 3577 / RP62A), this protein is Large-conductance mechanosensitive channel.